Reading from the N-terminus, the 383-residue chain is Meiotically up-regulated gene 93 protein (383 aa).

Residues 75–108 (KKVIWRRGLAYLRLGHPHLANRDWEHSLELDPNN) form a TPR repeat.

It localises to the cytoplasm. Its subcellular location is the nucleus. Has a role in meiosis. This is Meiotically up-regulated gene 93 protein (mug93) from Schizosaccharomyces pombe (strain 972 / ATCC 24843) (Fission yeast).